The primary structure comprises 210 residues: Large ribosomal subunit protein bL25 (210 aa).

The disordered stretch occupies residues 179–210 (LPPQQEEEIHSGEQQEPGQPEAEEGRETTPEG). Positions 201-210 (EEGRETTPEG) are enriched in basic and acidic residues.

Belongs to the bacterial ribosomal protein bL25 family. CTC subfamily. As to quaternary structure, part of the 50S ribosomal subunit; part of the 5S rRNA/L5/L18/L25 subcomplex. Contacts the 5S rRNA. Binds to the 5S rRNA independently of L5 and L18.

Its function is as follows. This is one of the proteins that binds to the 5S RNA in the ribosome where it forms part of the central protuberance. The chain is Large ribosomal subunit protein bL25 from Geobacillus thermodenitrificans (strain NG80-2).